Here is a 100-residue protein sequence, read N- to C-terminus: Gas vesicle protein J (100 aa).

This sequence belongs to the gas vesicle GvpA family. In terms of assembly, interacts with GvpA.

The protein localises to the gas vesicle. A minor component of the gas vesicle, might be involved in nucleating gas vesicle formation. This protein could be important for the shape determination of the gas vesicle. Gas vesicles (GV) are hollow, gas filled proteinaceous nanostructures. During planktonic growth they allow positioning of the organism at a favorable depth for light or nutrient acquisition. Its function is as follows. When a minimal gvp locus (gvpA2-gvpR-gvpN-gvpF-gvpG-gvpL-gvpS-gvpK-gvpJ-gvpT-gvpU, called pNL29) is expressed in E.coli gas vesicles are made. The chain is Gas vesicle protein J from Priestia megaterium (Bacillus megaterium).